Here is a 334-residue protein sequence, read N- to C-terminus: Sterol 4-C-methyltransferase strm-1 (334 aa).

It belongs to the class I-like SAM-binding methyltransferase superfamily. Erg6/SMT family. In terms of tissue distribution, expressed in the pharynx and hypodermal syncytium.

The catalysed reaction is 5alpha-cholest-7-en-3-one + S-adenosyl-L-methionine = 4alpha-methyl-5alpha-cholest-7-en-3-one + S-adenosyl-L-homocysteine + H(+). The protein operates within steroid hormone biosynthesis; dafachronic acid biosynthesis. Its function is as follows. Catalyzes the methyl transfer from S-adenosyl-methionine to the C-4 of the A-ring sterols such as lathosterone (5alpha-cholest-7-en-3-one) thereby rendering them unsuitable as ligand precursors. May irreversibly shunt sterols away from hormone dafachronic acid production. Dafachronic acids act as ligands and bind directly to the nuclear hormone receptor (NHR) daf-12 suppressing dauer formation and inducing reproductive growth. By reducing the biosynthesis of dafachronic acids, this methyltransferase can regulate dauer larva formation. The chain is Sterol 4-C-methyltransferase strm-1 (strm-1) from Caenorhabditis elegans.